The primary structure comprises 1047 residues: Probable sucrose-phosphate synthase 2 (1047 aa).

A compositionally biased stretch (basic and acidic residues) spans 101–123; the sequence is EGKNAKREAKREREREKARREVT. The interval 101–153 is disordered; that stretch reads EGKNAKREAKREREREKARREVTAEMSEDFSEGEKADLPGEIPTPSDNNTKGR. Phosphoserine occurs at positions 127, 131, and 159. The disordered stretch occupies residues 712–731; that stretch reads KSGSNNGVDTNLDAEDRAAE.

This sequence belongs to the glycosyltransferase 1 family. Homodimer or homotetramer. In terms of tissue distribution, expressed in roots, cauline leaves, flower buds, flowers and anthers. Highly expressed in maturing nectaries.

It carries out the reaction beta-D-fructose 6-phosphate + UDP-alpha-D-glucose = sucrose 6(F)-phosphate + UDP + H(+). It participates in glycan biosynthesis; sucrose biosynthesis; sucrose from D-fructose 6-phosphate and UDP-alpha-D-glucose: step 1/2. Its activity is regulated as follows. Activity is regulated by phosphorylation and moderated by concentration of metabolites and light. In terms of biological role, plays a role in photosynthetic sucrose synthesis by catalyzing the rate-limiting step of sucrose biosynthesis from UDP-glucose and fructose- 6-phosphate. Involved in the regulation of carbon partitioning in the leaves of plants. May regulate the synthesis of sucrose and therefore play a major role as a limiting factor in the export of photoassimilates out of the leaf. Plays a role for sucrose availability that is essential for plant growth and fiber elongation. Required for nectar secretion. This is Probable sucrose-phosphate synthase 2 (SPS2) from Arabidopsis thaliana (Mouse-ear cress).